The following is a 640-amino-acid chain: UvrABC system protein C (640 aa).

Residues Asn-22–Val-101 form the GIY-YIG domain. The UVR domain occupies Asp-211 to Leu-246.

It belongs to the UvrC family. In terms of assembly, interacts with UvrB in an incision complex.

The protein localises to the cytoplasm. The UvrABC repair system catalyzes the recognition and processing of DNA lesions. UvrC both incises the 5' and 3' sides of the lesion. The N-terminal half is responsible for the 3' incision and the C-terminal half is responsible for the 5' incision. This chain is UvrABC system protein C, found in Prochlorococcus marinus (strain NATL2A).